The primary structure comprises 44 residues: Mu-conotoxin-like Cal 12.1.2h (44 aa).

4 disulfide bridges follow: Cys3–Cys16, Cys11–Cys28, Cys18–Cys33, and Cys27–Cys38. 6'-bromotryptophan is present on Trp17. Residue Pro23 is modified to 4-hydroxyproline. 6'-bromotryptophan occurs at positions 36 and 37. The residue at position 39 (Pro39) is a 4-hydroxyproline. Trp43 carries the 6'-bromotryptophan modification.

As to expression, expressed by the venom duct.

The protein localises to the secreted. Mu-conotoxins block voltage-gated sodium channels. This toxin reversibly blocks voltage-gated sodium channel in cephalopods, with no alteration in the voltage dependence of sodium conductance or on the kinetics of inactivation. In Californiconus californicus (California cone), this protein is Mu-conotoxin-like Cal 12.1.2h.